Reading from the N-terminus, the 284-residue chain is uncharacterized protein (284 aa).

This is an uncharacterized protein from Streptomyces fradiae (Streptomyces roseoflavus).